The sequence spans 127 residues: Fluoride-specific ion channel FluC (127 aa).

4 consecutive transmembrane segments (helical) span residues 3-23 (LVFLWAALGGALGSSLRYFVG), 38-58 (LGTFSVNLIGCFVIGLMGHLA), 67-87 (FGIFFVTGVLGGFTTFSSYGL), and 102-122 (ISYVLGTNILGLIGVAIGWFL). 2 residues coordinate Na(+): Gly-77 and Thr-80.

Belongs to the fluoride channel Fluc/FEX (TC 1.A.43) family.

Its subcellular location is the cell inner membrane. The catalysed reaction is fluoride(in) = fluoride(out). With respect to regulation, na(+) is not transported, but it plays an essential structural role and its presence is essential for fluoride channel function. In terms of biological role, fluoride-specific ion channel. Important for reducing fluoride concentration in the cell, thus reducing its toxicity. This Helicobacter acinonychis (strain Sheeba) protein is Fluoride-specific ion channel FluC.